A 255-amino-acid chain; its full sequence is 5-oxoprolinase subunit A (255 aa).

Belongs to the LamB/PxpA family. As to quaternary structure, forms a complex composed of PxpA, PxpB and PxpC.

It catalyses the reaction 5-oxo-L-proline + ATP + 2 H2O = L-glutamate + ADP + phosphate + H(+). Its function is as follows. Catalyzes the cleavage of 5-oxoproline to form L-glutamate coupled to the hydrolysis of ATP to ADP and inorganic phosphate. The polypeptide is 5-oxoprolinase subunit A (Thermococcus sibiricus (strain DSM 12597 / MM 739)).